Reading from the N-terminus, the 534-residue chain is CTP synthase (534 aa).

The amidoligase domain stretch occupies residues 1–267 (MTKYIFVTGG…DQIVCDHLKL (267 aa)). S13 lines the CTP pocket. Residue S13 participates in UTP binding. An ATP-binding site is contributed by 14–19 (SIGKGI). Residue Y54 participates in L-glutamine binding. D71 is a binding site for ATP. Residues D71 and E141 each contribute to the Mg(2+) site. CTP is bound by residues 148–150 (DIE), 188–193 (KTKPTQ), and K224. Residues 188–193 (KTKPTQ) and K224 each bind UTP. 240–242 (RNV) lines the ATP pocket. Residues 292 to 534 (KIALVGKYVE…FVTAAIKNSN (243 aa)) enclose the Glutamine amidotransferase type-1 domain. G354 is an L-glutamine binding site. The active-site Nucleophile; for glutamine hydrolysis is C381. Residues 382-385 (LGMQ), E405, and R463 each bind L-glutamine. Residues H508 and E510 contribute to the active site.

This sequence belongs to the CTP synthase family. In terms of assembly, homotetramer.

The catalysed reaction is UTP + L-glutamine + ATP + H2O = CTP + L-glutamate + ADP + phosphate + 2 H(+). It catalyses the reaction L-glutamine + H2O = L-glutamate + NH4(+). The enzyme catalyses UTP + NH4(+) + ATP = CTP + ADP + phosphate + 2 H(+). It participates in pyrimidine metabolism; CTP biosynthesis via de novo pathway; CTP from UDP: step 2/2. With respect to regulation, allosterically activated by GTP, when glutamine is the substrate; GTP has no effect on the reaction when ammonia is the substrate. The allosteric effector GTP functions by stabilizing the protein conformation that binds the tetrahedral intermediate(s) formed during glutamine hydrolysis. Inhibited by the product CTP, via allosteric rather than competitive inhibition. In terms of biological role, catalyzes the ATP-dependent amination of UTP to CTP with either L-glutamine or ammonia as the source of nitrogen. Regulates intracellular CTP levels through interactions with the four ribonucleotide triphosphates. In Streptococcus pyogenes serotype M28 (strain MGAS6180), this protein is CTP synthase.